Reading from the N-terminus, the 791-residue chain is Leucine-rich repeat-containing protein SOG2 (791 aa).

Residues 1–28 (MVATSSKRTLDPKEEHLPADKTSTNSSN) are disordered. Over residues 8 to 19 (RTLDPKEEHLPA) the composition is skewed to basic and acidic residues. LRR repeat units follow at residues 43 to 64 (SGTT…DVGY), 67 to 88 (NVER…FKRL), 90 to 111 (RLQY…LTQC), 113 to 134 (QLEI…ISSF), 138 to 159 (NIRV…KSIT), and 163 to 183 (KLSI…DQVQ). A Phosphothreonine modification is found at Thr214. 2 disordered regions span residues 454–506 (ASKA…TPSA) and 534–569 (HTHG…PRQQ). Residues 469 to 486 (SSSSITSGGGPAASTTST) are compositionally biased toward low complexity. The span at 544 to 569 (NAISNGSSQTNMNEVKTTSDTIPRQQ) shows a compositional bias: polar residues.

The protein localises to the cytoplasm. Functionally, required for proper cell morphogenesis and cell separation after mitosis. Functions in the RAM (regulation of ACE2 activity and cellular morphogenesis) signaling network and is required for proper ACE2 localization and CBK1 kinase activity. The polypeptide is Leucine-rich repeat-containing protein SOG2 (Saccharomyces cerevisiae (strain ATCC 204508 / S288c) (Baker's yeast)).